We begin with the raw amino-acid sequence, 122 residues long: Ribosome-binding factor A (122 aa).

It belongs to the RbfA family. As to quaternary structure, monomer. Binds 30S ribosomal subunits, but not 50S ribosomal subunits or 70S ribosomes.

It localises to the cytoplasm. Functionally, one of several proteins that assist in the late maturation steps of the functional core of the 30S ribosomal subunit. Associates with free 30S ribosomal subunits (but not with 30S subunits that are part of 70S ribosomes or polysomes). Required for efficient processing of 16S rRNA. May interact with the 5'-terminal helix region of 16S rRNA. This Opitutus terrae (strain DSM 11246 / JCM 15787 / PB90-1) protein is Ribosome-binding factor A.